The primary structure comprises 570 residues: Proline--tRNA ligase (570 aa).

This sequence belongs to the class-II aminoacyl-tRNA synthetase family. ProS type 1 subfamily. In terms of assembly, homodimer.

It is found in the cytoplasm. The catalysed reaction is tRNA(Pro) + L-proline + ATP = L-prolyl-tRNA(Pro) + AMP + diphosphate. Its function is as follows. Catalyzes the attachment of proline to tRNA(Pro) in a two-step reaction: proline is first activated by ATP to form Pro-AMP and then transferred to the acceptor end of tRNA(Pro). As ProRS can inadvertently accommodate and process non-cognate amino acids such as alanine and cysteine, to avoid such errors it has two additional distinct editing activities against alanine. One activity is designated as 'pretransfer' editing and involves the tRNA(Pro)-independent hydrolysis of activated Ala-AMP. The other activity is designated 'posttransfer' editing and involves deacylation of mischarged Ala-tRNA(Pro). The misacylated Cys-tRNA(Pro) is not edited by ProRS. This chain is Proline--tRNA ligase, found in Shewanella pealeana (strain ATCC 700345 / ANG-SQ1).